The chain runs to 118 residues: Large ribosomal subunit protein uL18 (118 aa).

Residues 1 to 24 (MISKPDKNKIRQKRHRRVRGKLSG) are disordered. Over residues 10-20 (IRQKRHRRVRG) the composition is skewed to basic residues.

This sequence belongs to the universal ribosomal protein uL18 family. As to quaternary structure, part of the 50S ribosomal subunit; part of the 5S rRNA/L5/L18/L25 subcomplex. Contacts the 5S and 23S rRNAs.

Functionally, this is one of the proteins that bind and probably mediate the attachment of the 5S RNA into the large ribosomal subunit, where it forms part of the central protuberance. The chain is Large ribosomal subunit protein uL18 from Streptococcus mutans serotype c (strain ATCC 700610 / UA159).